The sequence spans 401 residues: Acetate kinase (401 aa).

A Mg(2+)-binding site is contributed by Asn7. Lys14 provides a ligand contact to ATP. Arg91 serves as a coordination point for substrate. Asp148 serves as the catalytic Proton donor/acceptor. ATP-binding positions include 208-212 (HLGNG), 283-285 (DFR), and 331-335 (GVGEN). Glu384 provides a ligand contact to Mg(2+).

Belongs to the acetokinase family. As to quaternary structure, homodimer. It depends on Mg(2+) as a cofactor. The cofactor is Mn(2+).

The protein resides in the cytoplasm. The enzyme catalyses acetate + ATP = acetyl phosphate + ADP. It functions in the pathway metabolic intermediate biosynthesis; acetyl-CoA biosynthesis; acetyl-CoA from acetate: step 1/2. Functionally, catalyzes the formation of acetyl phosphate from acetate and ATP. Can also catalyze the reverse reaction. The protein is Acetate kinase of Helicobacter hepaticus (strain ATCC 51449 / 3B1).